Consider the following 195-residue polypeptide: Pyruvoyl-dependent arginine decarboxylase AaxB (195 aa).

Ser53 bears the Pyruvic acid (Ser) mark.

Belongs to the pyruvoyl-dependent arginine decarboxylase family. In terms of assembly, trimer of an alpha-beta dimer. Requires pyruvate as cofactor.

The protein resides in the cytoplasm. It catalyses the reaction L-arginine + H(+) = agmatine + CO2. In terms of biological role, part of the AaxABC system, catalyzes the decarboxylation of L-arginine. The arginine uptake by the bacterium in the macrophage may be a virulence factor against the host innate immune response. This chain is Pyruvoyl-dependent arginine decarboxylase AaxB (aaxB), found in Chlamydia muridarum (strain MoPn / Nigg).